The primary structure comprises 90 residues: Cell division topological specificity factor (90 aa).

Residues methionine 1–alanine 21 form a disordered region. A compositionally biased stretch (basic and acidic residues) spans serine 10–alanine 21.

The protein belongs to the MinE family.

Its function is as follows. Prevents the cell division inhibition by proteins MinC and MinD at internal division sites while permitting inhibition at polar sites. This ensures cell division at the proper site by restricting the formation of a division septum at the midpoint of the long axis of the cell. The polypeptide is Cell division topological specificity factor (Acinetobacter baumannii (strain AB307-0294)).